The primary structure comprises 582 residues: Max-binding protein MNT (582 aa).

At S2 the chain carries N-acetylserine. The disordered stretch occupies residues 18-224; it reads QQQQRAREEQ…RPGGIGTREV (207 aa). A compositionally biased stretch (basic and acidic residues) spans 22–42; sequence RAREEQERLRLEQEREQEQKK. Pro residues-rich tracts occupy residues 61–82 and 99–108; these read EAPP…PLAT and QPLPPPPPLP. The span at 109–123 shows a compositional bias: low complexity; it reads AAAQPLPLAPRQPAL. 2 stretches are compositionally biased toward pro residues: residues 135–149 and 160–171; these read APLP…PAPL and NGSPKPLQPLPT. Over residues 203 to 214 the composition is skewed to basic and acidic residues; the sequence is PAEEVKSSEQKK. The 52-residue stretch at 220-271 folds into the bHLH domain; the sequence is GTREVHNKLEKNRRAHLKECFETLKRNIPNVDDKKTSNLSVLRTALRYIQSL. Residues 271-299 are leucine-zipper; sequence LKRKEKEYEHEMERLAREKIATQQRLAEL. A disordered region spans residues 319–422; it reads TGQPEDDQAS…PPPPAAPAQT (104 aa). The segment covering 334–345 has biased composition (acidic residues); sequence EGEDNIDEDMEE. Residues 368 to 381 are compositionally biased toward pro residues; it reads LPPPSTTPAPLPPH. Over residues 387-408 the composition is skewed to low complexity; it reads HSVALPPAHLPVQQQQPQQKTP. A compositionally biased stretch (pro residues) spans 409-418; the sequence is LPAPPPPPAA.

As to quaternary structure, efficient DNA binding requires dimerization with another bHLH protein. Binds DNA as a homodimer or a heterodimer with MAX.

The protein resides in the nucleus. Binds DNA as a heterodimer with MAX and represses transcription. Binds to the canonical E box sequence 5'-CACGTG-3' and, with higher affinity, to 5'-CACGCG-3'. This chain is Max-binding protein MNT (MNT), found in Homo sapiens (Human).